Reading from the N-terminus, the 179-residue chain is Translation initiation factor IF-3 (179 aa).

Belongs to the IF-3 family. Monomer.

The protein localises to the cytoplasm. IF-3 binds to the 30S ribosomal subunit and shifts the equilibrium between 70S ribosomes and their 50S and 30S subunits in favor of the free subunits, thus enhancing the availability of 30S subunits on which protein synthesis initiation begins. The chain is Translation initiation factor IF-3 from Bradyrhizobium diazoefficiens (strain JCM 10833 / BCRC 13528 / IAM 13628 / NBRC 14792 / USDA 110).